The sequence spans 270 residues: Aliphatic sulfonates import ATP-binding protein SsuB 3 (270 aa).

The region spanning 17–238 (LAVRNLKKAF…VRGSHRLAAL (222 aa)) is the ABC transporter domain. ATP is bound at residue 49-56 (GRSGCGKS).

It belongs to the ABC transporter superfamily. Aliphatic sulfonates importer (TC 3.A.1.17.2) family. The complex is composed of two ATP-binding proteins (SsuB), two transmembrane proteins (SsuC) and a solute-binding protein (SsuA).

The protein resides in the cell inner membrane. The catalysed reaction is ATP + H2O + aliphatic sulfonate-[sulfonate-binding protein]Side 1 = ADP + phosphate + aliphatic sulfonateSide 2 + [sulfonate-binding protein]Side 1.. Its function is as follows. Part of the ABC transporter complex SsuABC involved in aliphatic sulfonates import. Responsible for energy coupling to the transport system. The protein is Aliphatic sulfonates import ATP-binding protein SsuB 3 of Pseudomonas savastanoi pv. phaseolicola (strain 1448A / Race 6) (Pseudomonas syringae pv. phaseolicola (strain 1448A / Race 6)).